The chain runs to 254 residues: Serotonin N-acetyltransferase 1, chloroplastic (254 aa).

The transit peptide at 1–83 (MASAASASAS…NSTETVEPPS (83 aa)) directs the protein to the chloroplast. An N-acetyltransferase domain is found at 119–254 (VNVYDLQALC…IKGMFWYPRF (136 aa)).

The protein resides in the plastid. It localises to the chloroplast. The protein localises to the nucleus. It carries out the reaction a 2-arylethylamine + acetyl-CoA = an N-acetyl-2-arylethylamine + CoA + H(+). The protein operates within aromatic compound metabolism; melatonin biosynthesis; melatonin from serotonin: step 1/2. Functionally, catalyzes the N-acetylation of serotonin into N-acetylserotonin, the penultimate step in the synthesis of melatonin. Catalyzes in vitro the N-acetylation of tryptamine to produce N-acetyltryptamine, 5-methoxytryptamine to produce melatonin and tyramine to produce N-acetyltyramine. Acetyltransferase required for geminivirus infection and systemic spread. This Oryza sativa subsp. indica (Rice) protein is Serotonin N-acetyltransferase 1, chloroplastic.